Consider the following 327-residue polypeptide: Protein CONSERVED IN THE GREEN LINEAGE AND DIATOMS 27, chloroplastic (327 aa).

The transit peptide at 1–59 (MLRLIVNYPLIPKISHRVCSNSSSKLGSYYDSSSIIKYGGISDVVGKKQELFLSVSVKA) directs the protein to the chloroplast. Residues 66-88 (NGGGSMSFSGQSWDPSSEIEVPS) form a disordered region. A run of 3 helical transmembrane segments spans residues 119–139 (LGGL…AASF), 148–168 (FILA…LRIY), and 225–245 (LIGT…ATPV).

As to expression, mostly expressed in seeds, leaves and flowers, and, to a lower extent, in roots.

The protein resides in the membrane. It localises to the plastid. The protein localises to the chloroplast. Its function is as follows. Required for growth in low iron conditions. This is Protein CONSERVED IN THE GREEN LINEAGE AND DIATOMS 27, chloroplastic from Arabidopsis thaliana (Mouse-ear cress).